Consider the following 117-residue polypeptide: Large ribosomal subunit protein bL31B (117 aa).

The interval 75–117 (KRFERKKEASPADTPPESDSTTENASVEKKAEKKRVTAKGSKK) is disordered. Positions 100–109 (SVEKKAEKKR) are enriched in basic and acidic residues.

This sequence belongs to the bacterial ribosomal protein bL31 family. Type B subfamily. Part of the 50S ribosomal subunit.

This Protochlamydia amoebophila (strain UWE25) protein is Large ribosomal subunit protein bL31B.